We begin with the raw amino-acid sequence, 873 residues long: Alanine--tRNA ligase (873 aa).

Zn(2+) contacts are provided by histidine 562, histidine 566, cysteine 666, and histidine 670.

This sequence belongs to the class-II aminoacyl-tRNA synthetase family. It depends on Zn(2+) as a cofactor.

It localises to the cytoplasm. It carries out the reaction tRNA(Ala) + L-alanine + ATP = L-alanyl-tRNA(Ala) + AMP + diphosphate. Its function is as follows. Catalyzes the attachment of alanine to tRNA(Ala) in a two-step reaction: alanine is first activated by ATP to form Ala-AMP and then transferred to the acceptor end of tRNA(Ala). Also edits incorrectly charged Ser-tRNA(Ala) and Gly-tRNA(Ala) via its editing domain. The chain is Alanine--tRNA ligase from Dichelobacter nodosus (strain VCS1703A).